The chain runs to 297 residues: Nucleotide-binding protein BMA10229_A1510 (297 aa).

8–15 (GISGSGKS) contacts ATP. 57 to 60 (DARS) is a binding site for GTP.

The protein belongs to the RapZ-like family.

Displays ATPase and GTPase activities. The chain is Nucleotide-binding protein BMA10229_A1510 from Burkholderia mallei (strain NCTC 10229).